Here is a 255-residue protein sequence, read N- to C-terminus: Uracil-DNA glycosylase (255 aa).

Residue aspartate 93 is the Proton acceptor of the active site.

It belongs to the uracil-DNA glycosylase (UDG) superfamily. UNG family.

The protein resides in the host nucleus. It carries out the reaction Hydrolyzes single-stranded DNA or mismatched double-stranded DNA and polynucleotides, releasing free uracil.. In terms of biological role, excises uracil residues from the DNA which can arise as a result of misincorporation of dUMP residues by DNA polymerase or deamination of cytosines. Therefore may reduce deleterious uracil incorporation into the viral genome, particularly in terminally differentiated cells which lack DNA repair enzymes. This chain is Uracil-DNA glycosylase (U81), found in Human herpesvirus 6A (strain Uganda-1102) (HHV-6 variant A).